Reading from the N-terminus, the 221-residue chain is Epididymal secretory glutathione peroxidase (221 aa).

Positions 1 to 21 (MTTQLRVVHLLPLLLACFVQT) are cleaved as a signal peptide. The active site involves C73.

The protein belongs to the glutathione peroxidase family. Epididymis.

The protein resides in the secreted. It catalyses the reaction 2 glutathione + H2O2 = glutathione disulfide + 2 H2O. Its function is as follows. Protects cells and enzymes from oxidative damage, by catalyzing the reduction of hydrogen peroxide, lipid peroxides and organic hydroperoxide, by glutathione. May constitute a glutathione peroxidase-like protective system against peroxide damage in sperm membrane lipids. This chain is Epididymal secretory glutathione peroxidase (GPX5), found in Macaca fascicularis (Crab-eating macaque).